We begin with the raw amino-acid sequence, 1391 residues long: DNA-directed RNA polymerase subunit beta' (1391 aa).

C72, C74, C87, and C90 together coordinate Zn(2+). Residues D462, D464, and D466 each coordinate Mg(2+). The Zn(2+) site is built by C816, C890, C897, and C900.

This sequence belongs to the RNA polymerase beta' chain family. The RNAP catalytic core consists of 2 alpha, 1 beta, 1 beta' and 1 omega subunit. When a sigma factor is associated with the core the holoenzyme is formed, which can initiate transcription. The cofactor is Mg(2+). Zn(2+) is required as a cofactor.

It carries out the reaction RNA(n) + a ribonucleoside 5'-triphosphate = RNA(n+1) + diphosphate. DNA-dependent RNA polymerase catalyzes the transcription of DNA into RNA using the four ribonucleoside triphosphates as substrates. This is DNA-directed RNA polymerase subunit beta' from Neisseria meningitidis serogroup A / serotype 4A (strain DSM 15465 / Z2491).